Consider the following 473-residue polypeptide: Ion-translocating oxidoreductase complex subunit C (473 aa).

4Fe-4S ferredoxin-type domains follow at residues 328–357 and 368–396; these read KNESISEKTCIRCGYCSYVCPVNLLPQQLY and TKKHYVLDCIECKACEKVCPSYIPLVKYF. Cys-337, Cys-340, Cys-343, Cys-347, Cys-376, Cys-379, Cys-382, and Cys-386 together coordinate [4Fe-4S] cluster.

This sequence belongs to the 4Fe4S bacterial-type ferredoxin family. RnfC subfamily. As to quaternary structure, the complex is composed of six subunits: RnfA, RnfB, RnfC, RnfD, RnfE and RnfG. It depends on [4Fe-4S] cluster as a cofactor.

Its subcellular location is the cell inner membrane. Its function is as follows. Part of a membrane-bound complex that couples electron transfer with translocation of ions across the membrane. This is Ion-translocating oxidoreductase complex subunit C from Buchnera aphidicola subsp. Acyrthosiphon pisum (strain APS) (Acyrthosiphon pisum symbiotic bacterium).